Reading from the N-terminus, the 108-residue chain is Protein YcgL (108 aa).

Residues 12 to 96 (MFCVIYRSSK…PPEDLLKQHL (85 aa)) enclose the YcgL domain.

The chain is Protein YcgL from Escherichia coli O17:K52:H18 (strain UMN026 / ExPEC).